The following is a 706-amino-acid chain: Fatty acid oxidation complex subunit alpha (706 aa).

An enoyl-CoA hydratase region spans residues 1–188; it reads MEKTFNLTRR…KMGLVNDVVP (188 aa). Residues 308–706 form a 3-hydroxyacyl-CoA dehydrogenase region; that stretch reads RKVKKAVILG…TMARENVSFF (399 aa).

It in the N-terminal section; belongs to the enoyl-CoA hydratase/isomerase family. In the central section; belongs to the 3-hydroxyacyl-CoA dehydrogenase family. Heterotetramer of two alpha chains (FadJ) and two beta chains (FadI).

It localises to the cytoplasm. It catalyses the reaction a (3S)-3-hydroxyacyl-CoA = a (2E)-enoyl-CoA + H2O. The catalysed reaction is a 4-saturated-(3S)-3-hydroxyacyl-CoA = a (3E)-enoyl-CoA + H2O. The enzyme catalyses a (3S)-3-hydroxyacyl-CoA + NAD(+) = a 3-oxoacyl-CoA + NADH + H(+). It carries out the reaction (3S)-3-hydroxybutanoyl-CoA = (3R)-3-hydroxybutanoyl-CoA. The protein operates within lipid metabolism; fatty acid beta-oxidation. Its function is as follows. Catalyzes the formation of a hydroxyacyl-CoA by addition of water on enoyl-CoA. Also exhibits 3-hydroxyacyl-CoA epimerase and 3-hydroxyacyl-CoA dehydrogenase activities. This chain is Fatty acid oxidation complex subunit alpha, found in Shewanella sp. (strain W3-18-1).